The primary structure comprises 183 residues: Ferritin heavy chain (183 aa).

At M1 the chain carries N-acetylmethionine. T2 carries the N-acetylthreonine; in Ferritin heavy chain, N-terminally processed modification. Residues 11–160 (QNYHQDSEAA…DHVTNLRKMG (150 aa)) enclose the Ferritin-like diiron domain. E28, E63, H66, E108, and Q142 together coordinate Fe cation. Phosphoserine occurs at positions 179 and 183.

It belongs to the ferritin family. As to quaternary structure, oligomer of 24 subunits. There are two types of subunits: L (light) chain and H (heavy) chain. The major chain can be light or heavy, depending on the species and tissue type. The functional molecule forms a roughly spherical shell with a diameter of 12 nm and contains a central cavity into which the insoluble mineral iron core is deposited. Interacts with NCOA4; NCOA4 promotes targeting of the iron-binding ferritin complex to autolysosomes following starvation or iron depletion. As to expression, ubiquitous.

The protein localises to the cytoplasm. The protein resides in the lysosome. It is found in the cytoplasmic vesicle. Its subcellular location is the autophagosome. The catalysed reaction is 4 Fe(2+) + O2 + 4 H(+) = 4 Fe(3+) + 2 H2O. In terms of biological role, stores iron in a soluble, non-toxic, readily available form. Important for iron homeostasis. Has ferroxidase activity. Iron is taken up in the ferrous form and deposited as ferric hydroxides after oxidation. Also plays a role in delivery of iron to cells. Mediates iron uptake in capsule cells of the developing kidney. Delivery to lysosomes is mediated by the cargo receptor NCOA4 for autophagic degradation and release of iron. The sequence is that of Ferritin heavy chain (FTH1) from Trichosurus vulpecula (Brush-tailed possum).